A 189-amino-acid chain; its full sequence is Peptidyl-tRNA hydrolase (189 aa).

Residue Y14 participates in tRNA binding. H19 (proton acceptor) is an active-site residue. Residues Y64, N66, and N112 each contribute to the tRNA site.

This sequence belongs to the PTH family. In terms of assembly, monomer.

The protein localises to the cytoplasm. The catalysed reaction is an N-acyl-L-alpha-aminoacyl-tRNA + H2O = an N-acyl-L-amino acid + a tRNA + H(+). Its function is as follows. Hydrolyzes ribosome-free peptidyl-tRNAs (with 1 or more amino acids incorporated), which drop off the ribosome during protein synthesis, or as a result of ribosome stalling. Catalyzes the release of premature peptidyl moieties from peptidyl-tRNA molecules trapped in stalled 50S ribosomal subunits, and thus maintains levels of free tRNAs and 50S ribosomes. This is Peptidyl-tRNA hydrolase from Brevibacillus brevis (strain 47 / JCM 6285 / NBRC 100599).